The following is a 622-amino-acid chain: Iron transport multicopper oxidase FET3 (622 aa).

The first 22 residues, 1–22 (MRPKLLSVEAALFLALPELARA), serve as a signal peptide directing secretion. Over 23-553 (ATRKFDFEIG…NTLPPGFTPR (531 aa)) the chain is Extracellular. Plastocyanin-like domains follow at residues 31-146 (IGWV…VHDK), 156-303 (EEVV…VYDK), and 363-498 (YTEA…VEDP). An N-linked (GlcNAc...) asparagine glycan is attached at asparagine 76. Residues histidine 82 and histidine 84 each contribute to the Cu cation site. 2 N-linked (GlcNAc...) asparagine glycosylation sites follow: asparagine 89 and asparagine 114. Cu cation contacts are provided by histidine 126 and histidine 128. N-linked (GlcNAc...) asparagine glycosylation is found at asparagine 196, asparagine 200, and asparagine 294. Positions 414, 417, and 419 each coordinate Cu cation. N-linked (GlcNAc...) asparagine glycosylation occurs at asparagine 440. Cu cation is bound by residues histidine 479, cysteine 480, histidine 481, and histidine 485. Residues 554–574 (GIVALVFSCICGILGVAVVAW) form a helical membrane-spanning segment. Topologically, residues 575 to 622 (YGFSAPVGSTSAGALSAGLVENDSGDVHSAQKGPQETVVSPTGDARSH) are cytoplasmic. The interval 597 to 622 (DSGDVHSAQKGPQETVVSPTGDARSH) is disordered.

The protein belongs to the multicopper oxidase family.

Its subcellular location is the cell membrane. In terms of biological role, cell surface ferroxidase; part of the reductive iron assimilatory system (RIA), a siderophore-independent iron acquisition process. Required to oxidize Fe(2+) and release it from the transporter. Seems not to be involved in virulence. The sequence is that of Iron transport multicopper oxidase FET3 from Gibberella zeae (strain ATCC MYA-4620 / CBS 123657 / FGSC 9075 / NRRL 31084 / PH-1) (Wheat head blight fungus).